Reading from the N-terminus, the 484-residue chain is Hemogen (484 aa).

Residues 1–25 are compositionally biased toward basic and acidic residues; that stretch reads MDLGKDQSHLKHHQTPDPHQEENHS. Disordered stretches follow at residues 1 to 32 and 44 to 91; these read MDLG…IGTW and KAEV…PQPQ. Positions 7–87 are necessary for nuclear localization; it reads QSHLKHHQTP…RQQNTELKVE (81 aa). The span at 61–79 shows a compositional bias: basic residues; it reads KKRKQQRTGKGNRRGRKRQ. Phosphoserine is present on residues S123, S159, S181, S188, and S201. Phosphothreonine is present on T246. Disordered regions lie at residues 265 to 290, 306 to 369, and 386 to 471; these read DVPK…TDQG, EPKD…YSPE, and QETS…ILNE. Residues 306 to 320 show a composition bias toward basic and acidic residues; the sequence is EPKDLSTKTHQESAE. S349 and S353 each carry phosphoserine. T360 carries the phosphothreonine modification. A phosphoserine mark is found at S363 and S367. 3 stretches are compositionally biased toward basic and acidic residues: residues 413–428, 438–447, and 454–463; these read YKNK…EPHQ, PKAHQEDAKD, and EMKEKPKEEP.

Expressed in hematopoietic precursor cells, thyroid and spermatids (at protein level). Expressed in bone marrow, testis, thymus. Expressed in prostate cancer and ovarian cancer. Also expressed in thymus and thyroid tumors, non-Hodgkin lymphoma, various leukemia cell lines, peripheral blood mononuclear cells (PBMCs) and bone marrow mononuclear cells (BMMCs) of patients with leukemia.

It localises to the nucleus. Functionally, regulates the proliferation and differentiation of hematopoietic cells. Overexpression block the TPA-induced megakaryocytic differentiation in the K562 cell model. May also prevent cell apoptosis through the activation of the nuclear factor-kappa B (NF-kB). This Homo sapiens (Human) protein is Hemogen (HEMGN).